The sequence spans 340 residues: L-lysine 2,3-aminomutase (340 aa).

Residues 106-321 form the Radical SAM core domain; sequence RKYNNRILLL…SMISGFLVPK (216 aa). Residues C120, C124, and C127 each contribute to the [4Fe-4S] cluster site. K332 carries the N6-(pyridoxal phosphate)lysine modification.

Belongs to the radical SAM superfamily. KamA family. It depends on [4Fe-4S] cluster as a cofactor. Pyridoxal 5'-phosphate is required as a cofactor.

It catalyses the reaction L-lysine = D-beta-lysine. With EpmA is involved in the beta-lysylation step of the post-translational modification of translation elongation factor P (EF-P) on 'Lys-34'. EpmB appears to act before EpmA. Displays lysine 2,3-aminomutase activity, producing (R)-beta-lysine from (S)-alpha-lysine (L-lysine). This is L-lysine 2,3-aminomutase (epmB) from Buchnera aphidicola subsp. Baizongia pistaciae (strain Bp).